Here is a 512-residue protein sequence, read N- to C-terminus: MGDRLYIFDTTLRDGEQSPGASMSKEEKIRIARQLERLGVDIIEAGFAAASPGDFDAIHAIAETIKDSTVCSLARANERDVRAAGEAIKPAARGRIHTFIATSPIHMEKKLRMSPDEVVDAAVKAVKIAREYTDDVEFSAEDALRSDIDFLARIFGEVIKAGATTLNVPDTVGYAVPRLTEAFFRELIARTPGGDKVVWSAHCHNDLGMAVANSLAAVLGGARQVECTINGLGERAGNASLEEVVMAVKTRRDVFGVDSRVDATQIVPASKLVSTVTGYPVQPNKAIVGANAFAHESGIHQDGVLKHRETYEIMSAESVGWSANRLTLGKLSGRNAFKTKLSELGIVLDSEEALNAAFARFKELADKKREIFDEDLHALVSDEMVTIEREDYKLVSLKVVSETGEPPLASIVFVEHGQEQHGESSGSGPVDAAFKAIEKVVGSGAELELYSVNAITKGTESQGEVTVRLSREGRIVNGQGADTDIIVASAKAYLSALNKLTIEEKMNAQAAA.

Positions 5-267 constitute a Pyruvate carboxyltransferase domain; that stretch reads LYIFDTTLRD…DSRVDATQIV (263 aa). Residues D14, H202, H204, and N238 each coordinate Mn(2+). The regulatory domain stretch occupies residues 393–512; that stretch reads KLVSLKVVSE…EEKMNAQAAA (120 aa).

It belongs to the alpha-IPM synthase/homocitrate synthase family. LeuA type 1 subfamily. As to quaternary structure, homodimer. It depends on Mn(2+) as a cofactor.

Its subcellular location is the cytoplasm. The enzyme catalyses 3-methyl-2-oxobutanoate + acetyl-CoA + H2O = (2S)-2-isopropylmalate + CoA + H(+). Its pathway is amino-acid biosynthesis; L-leucine biosynthesis; L-leucine from 3-methyl-2-oxobutanoate: step 1/4. Catalyzes the condensation of the acetyl group of acetyl-CoA with 3-methyl-2-oxobutanoate (2-ketoisovalerate) to form 3-carboxy-3-hydroxy-4-methylpentanoate (2-isopropylmalate). The protein is 2-isopropylmalate synthase of Chromobacterium violaceum (strain ATCC 12472 / DSM 30191 / JCM 1249 / CCUG 213 / NBRC 12614 / NCIMB 9131 / NCTC 9757 / MK).